The following is a 153-amino-acid chain: Putative pre-16S rRNA nuclease (153 aa).

It belongs to the YqgF nuclease family.

It is found in the cytoplasm. Its function is as follows. Could be a nuclease involved in processing of the 5'-end of pre-16S rRNA. The chain is Putative pre-16S rRNA nuclease from Prochlorococcus marinus (strain MIT 9215).